Consider the following 293-residue polypeptide: Protein YIF1A (293 aa).

The segment at 1–33 (MAYHSGYGAHGSKHRARAAPDPPPLFDDTSGGY) is disordered. N-acetylalanine is present on A2. At 2–138 (AYHSGYGAHG…PPRQDLNAPD (137 aa)) the chain is on the cytoplasmic side. S12 carries the post-translational modification Phosphoserine. The chain crosses the membrane as a helical span at residues 139–159 (LYIPTMAFITYVLLAGMALGI). Over 160–174 (QKRFSPEVLGLCAST) the chain is Lumenal. A helical membrane pass occupies residues 175–195 (ALVWVVMEVLALLLGLYLATV). Residues 196–203 (RSDLSTFH) lie on the Cytoplasmic side of the membrane. A helical transmembrane segment spans residues 204 to 226 (LLAYSGYKYVGMILSVLTGLLFG). Topologically, residues 227 to 229 (SDG) are lumenal. The chain crosses the membrane as a helical span at residues 230–249 (YYVALAWTSSALMYFIVRSL). At 250 to 271 (RTAALGPDSMGGPVPRQRLQLY) the chain is on the cytoplasmic side. A helical transmembrane segment spans residues 272–292 (LTLGAAAFQPLIIYWLTFHLV).

The protein belongs to the YIF1 family. As to quaternary structure, interacts with YIPF5.

It localises to the endoplasmic reticulum membrane. The protein localises to the golgi apparatus membrane. It is found in the endoplasmic reticulum-Golgi intermediate compartment membrane. Its function is as follows. Possible role in transport between endoplasmic reticulum and Golgi. This is Protein YIF1A (YIF1A) from Homo sapiens (Human).